The following is a 360-amino-acid chain: Decorin (360 aa).

The first 16 residues, 1 to 16, serve as a signal peptide directing secretion; that stretch reads MTATLILLLLAQVSWA. A propeptide spanning residues 17–30 is cleaved from the precursor; it reads GPFQQRGLFDFMLE. O-linked (Xyl...) (glycosaminoglycan) serine glycosylation occurs at serine 34. 2 disulfide bridges follow: cysteine 55–cysteine 61 and cysteine 59–cysteine 68. LRR repeat units follow at residues 74 to 94, 95 to 118, 119 to 142, 143 to 163, 164 to 187, 188 to 213, 214 to 234, 235 to 258, 259 to 282, 283 to 305, 306 to 335, and 336 to 360; these read DKVP…NNKI, TEIK…NNKI, SKIS…KNHL, KELP…ENEI, TKVR…TNPL, KSSG…DTNI, TTIP…GNKI, TKID…FNDI, SAVD…NNKL, IRVP…NNNI, SVVG…SNPV, and QYWE…GNYK. N-linked (GlcNAc...) asparagine glycosylation is present at asparagine 212. 2 N-linked (GlcNAc...) asparagine glycosylation sites follow: asparagine 263 and asparagine 304. Cysteine 314 and cysteine 347 form a disulfide bridge.

It belongs to the small leucine-rich proteoglycan (SLRP) family. SLRP class I subfamily. In terms of assembly, binds to type I and type II collagen, fibronectin and TGF-beta. Forms a ternary complex with MFAP2 and ELN. Interacts with DPT. The attached glycosaminoglycan chain can be either chondroitin sulfate or dermatan sulfate depending upon the tissue of origin.

Its subcellular location is the secreted. The protein localises to the extracellular space. The protein resides in the extracellular matrix. Its function is as follows. May affect the rate of fibrils formation. In Oryctolagus cuniculus (Rabbit), this protein is Decorin (DCN).